The sequence spans 95 residues: Large ribosomal subunit protein bL25 (95 aa).

This sequence belongs to the bacterial ribosomal protein bL25 family. In terms of assembly, part of the 50S ribosomal subunit; part of the 5S rRNA/L5/L18/L25 subcomplex. Contacts the 5S rRNA. Binds to the 5S rRNA independently of L5 and L18.

Its function is as follows. This is one of the proteins that binds to the 5S RNA in the ribosome where it forms part of the central protuberance. The sequence is that of Large ribosomal subunit protein bL25 from Haemophilus influenzae (strain PittGG).